We begin with the raw amino-acid sequence, 49 residues long: Small ribosomal subunit protein eS31 (49 aa).

Residues Cys-21, Cys-24, Cys-39, and Cys-42 each coordinate Zn(2+). Residues 21 to 42 (CPRCGPGVFLADHKNRLACGKC) form a C4-type zinc finger.

It belongs to the eukaryotic ribosomal protein eS31 family. Part of the 30S ribosomal subunit. Zn(2+) is required as a cofactor.

The polypeptide is Small ribosomal subunit protein eS31 (Methanosarcina mazei (strain ATCC BAA-159 / DSM 3647 / Goe1 / Go1 / JCM 11833 / OCM 88) (Methanosarcina frisia)).